The following is a 314-amino-acid chain: GDP-L-fucose synthase (314 aa).

NADP(+)-binding positions include 15 to 21 and 109 to 112; these read GHKGMVG and LGSS. The Proton donor/acceptor role is filled by tyrosine 140. NADP(+)-binding positions include lysine 144, 167-170, and histidine 183; that span reads PTNL. 4 residues coordinate substrate: lysine 191, tryptophan 206, arginine 213, and aspartate 273.

This sequence belongs to the NAD(P)-dependent epimerase/dehydratase family. Fucose synthase subfamily.

The enzyme catalyses GDP-beta-L-fucose + NADP(+) = GDP-4-dehydro-alpha-D-rhamnose + NADPH + H(+). It functions in the pathway nucleotide-sugar biosynthesis; GDP-L-fucose biosynthesis via de novo pathway; GDP-L-fucose from GDP-alpha-D-mannose: step 2/2. In terms of biological role, catalyzes the two-step NADP-dependent conversion of GDP-4-dehydro-6-deoxy-D-mannose to GDP-fucose, involving an epimerase and a reductase reaction. This is GDP-L-fucose synthase from Sinorhizobium fredii (strain NBRC 101917 / NGR234).